The sequence spans 446 residues: Aspartokinase (446 aa).

One can recognise an RPE1 insert domain in the interval 250 to 294; that stretch reads IPLVKSTYMEESALNTKHSTKIDIPEDASGSTYKLPIELALQNRY.

Belongs to the aspartokinase family.

The catalysed reaction is L-aspartate + ATP = 4-phospho-L-aspartate + ADP. The protein operates within amino-acid biosynthesis; L-lysine biosynthesis via DAP pathway; (S)-tetrahydrodipicolinate from L-aspartate: step 1/4. Its pathway is amino-acid biosynthesis; L-methionine biosynthesis via de novo pathway; L-homoserine from L-aspartate: step 1/3. It functions in the pathway amino-acid biosynthesis; L-threonine biosynthesis; L-threonine from L-aspartate: step 1/5. The sequence is that of Aspartokinase (lysC) from Rickettsia prowazekii (strain Madrid E).